The following is a 351-amino-acid chain: Inactive RHOMBOID-like protein 8 (351 aa).

7 consecutive transmembrane segments (helical) span residues 48–68 (TWLV…TMGV), 130–150 (WLHS…FVGI), 160–180 (RIAV…VLFV), 183–203 (IPSI…LSAL), 216–236 (ALAI…LPFI), 239–259 (FANI…LFKP), and 294–314 (IICL…ACWG).

This sequence belongs to the peptidase S54 family. Expressed in pollen mother cell.

It is found in the golgi apparatus membrane. In terms of biological role, probable inactive rhomboid-type serine protease. Probably essential for the meiosis stage-specific callose accumulation and pollen exine formation. This is Inactive RHOMBOID-like protein 8 from Arabidopsis thaliana (Mouse-ear cress).